A 347-amino-acid polypeptide reads, in one-letter code: uncharacterized protein (347 aa).

Residues C5 to R44 form an RING-type zinc finger. Positions N244–R321 constitute a WWE domain.

This is an uncharacterized protein from Caenorhabditis elegans.